The primary structure comprises 67 residues: Nigrocin-2GRc (67 aa).

Positions 1–22 (MFTMKKSMLLLFFLGTISLSLC) are cleaved as a signal peptide. Positions 23 to 46 (EQERNADEEERRDEEVAKMEEIKR) are excised as a propeptide. Residues Cys61 and Cys67 are joined by a disulfide bond.

As to expression, expressed by the skin glands.

It localises to the secreted. In terms of biological role, antimicrobial peptide active at least against the Gram-positive bacterium S.aureus but with otherwise unclear activity spectrum. Lacks hemolytic activity against rabbit or human erythrocytes. The polypeptide is Nigrocin-2GRc (Odorrana grahami (Yunnanfu frog)).